Consider the following 271-residue polypeptide: D-methionine-binding lipoprotein MetQ (271 aa).

The first 22 residues, 1-22 (MAFKFKTFAAVGALIGSLALAG), serve as a signal peptide directing secretion. A lipid anchor (N-palmitoyl cysteine) is attached at C23. C23 is lipidated: S-diacylglycerol cysteine.

This sequence belongs to the NlpA lipoprotein family.

Its subcellular location is the cell membrane. This protein is a component of a D-methionine permease, a binding protein-dependent, ATP-driven transport system. The chain is D-methionine-binding lipoprotein MetQ (metQ) from Salmonella typhi.